Here is a 345-residue protein sequence, read N- to C-terminus: NADH-quinone oxidoreductase subunit 8 (345 aa).

A run of 8 helical transmembrane segments spans residues 15 to 35, 82 to 102, 115 to 135, 161 to 181, 190 to 210, 240 to 262, 278 to 298, and 309 to 329; these read MLLQ…FMVY, FVYF…FVVI, VGIL…IMGG, LGLI…TAIV, LLNW…VSAL, YLLF…SLLF, WWMV…KAIV, and IGWK…AILA.

This sequence belongs to the complex I subunit 1 family. As to quaternary structure, NDH-1 is composed of at least 14 different subunits, Nqo1 to Nqo14. The complex has a L-shaped structure, with the hydrophobic arm (subunits Nqo7, Nqo8, Nqo10 to Nqo14) embedded in the inner membrane and the hydrophilic peripheral arm (subunits Nqo1 to Nqo6, Nqo9) protruding into the bacterial cytoplasm. The hydrophilic domain contains all the redox centers.

The protein resides in the cell inner membrane. The enzyme catalyses a quinone + NADH + 5 H(+)(in) = a quinol + NAD(+) + 4 H(+)(out). In terms of biological role, NDH-1 shuttles electrons from NADH, via FMN and iron-sulfur (Fe-S) centers, to quinones in the respiratory chain. The immediate electron acceptor for the enzyme in this species is believed to be ubiquinone. Couples the redox reaction to proton translocation (for every two electrons transferred, four hydrogen ions are translocated across the cytoplasmic membrane), and thus conserves the redox energy in a proton gradient. In Paracoccus denitrificans, this protein is NADH-quinone oxidoreductase subunit 8.